A 579-amino-acid chain; its full sequence is Adenine/guanine permease AZG1 (579 aa).

A run of 12 helical transmembrane segments spans residues 52–72, 131–151, 183–203, 221–241, 260–280, 292–312, 320–340, 379–399, 414–434, 459–479, 480–500, and 514–534; these read AGTA…SILS, LIVA…LMAN, TALA…AIGF, AGIG…IGLV, ISLA…AGGS, MESP…YCLV, IYGI…VTAF, FWEA…GTLY, FAGQ…GSLL, AITV…LASI, PAWA…KSVT, and FVTM…IGGI.

This sequence belongs to the nucleobase:cation symporter-2 (NCS2) (TC 2.A.40) family. Azg-like subfamily.

Its subcellular location is the membrane. Its function is as follows. Transports natural purines (adenine and guanine) as well as purine analogs. Confers sensitivity to 8-azaadenine and 8-azaguanine (8-azg). This is Adenine/guanine permease AZG1 (AZG1) from Arabidopsis thaliana (Mouse-ear cress).